Consider the following 110-residue polypeptide: Small ribosomal subunit protein uS17 (110 aa).

The protein belongs to the universal ribosomal protein uS17 family. As to quaternary structure, part of the 30S ribosomal subunit.

Functionally, one of the primary rRNA binding proteins, it binds specifically to the 5'-end of 16S ribosomal RNA. The sequence is that of Small ribosomal subunit protein uS17 from Petrotoga mobilis (strain DSM 10674 / SJ95).